A 152-amino-acid chain; its full sequence is Nucleoside diphosphate kinase (152 aa).

Residues Lys10, Phe58, Arg86, Thr92, Arg103, and Asn113 each coordinate ATP. His116 (pros-phosphohistidine intermediate) is an active-site residue.

The protein belongs to the NDK family. Mg(2+) is required as a cofactor.

The protein resides in the cytoplasm. It carries out the reaction a 2'-deoxyribonucleoside 5'-diphosphate + ATP = a 2'-deoxyribonucleoside 5'-triphosphate + ADP. It catalyses the reaction a ribonucleoside 5'-diphosphate + ATP = a ribonucleoside 5'-triphosphate + ADP. Its function is as follows. Major role in the synthesis of nucleoside triphosphates other than ATP. The ATP gamma phosphate is transferred to the NDP beta phosphate via a ping-pong mechanism, using a phosphorylated active-site intermediate. This Methanosphaera stadtmanae (strain ATCC 43021 / DSM 3091 / JCM 11832 / MCB-3) protein is Nucleoside diphosphate kinase.